The sequence spans 244 residues: MKIDLNADLGEGCASDAELLTLVSSANIACGFHAGDAQTMQASVREAVKNGVAIGAHPGFPDRENFGRTAMQLPPETVYAQTLYQIGALAAITHAEGGVMRHVKPHGMLYNQAAKEPQLADAIAKAVHACDPALILVGLAGSELIRAGKHYGLTTRQEVFADRGYQADGSLVPRSQPGALIEDEEQSLAQTLEMVQNGRVKSITGEWTPVEAQTVCLHGDGEHALAFARRLRAAFLERGIAVQA.

It belongs to the LamB/PxpA family. In terms of assembly, forms a complex composed of PxpA, PxpB and PxpC.

It catalyses the reaction 5-oxo-L-proline + ATP + 2 H2O = L-glutamate + ADP + phosphate + H(+). Catalyzes the cleavage of 5-oxoproline to form L-glutamate coupled to the hydrolysis of ATP to ADP and inorganic phosphate. The polypeptide is 5-oxoprolinase subunit A (Escherichia fergusonii (strain ATCC 35469 / DSM 13698 / CCUG 18766 / IAM 14443 / JCM 21226 / LMG 7866 / NBRC 102419 / NCTC 12128 / CDC 0568-73)).